Consider the following 230-residue polypeptide: LexA repressor (230 aa).

The H-T-H motif DNA-binding region spans 28–48 (LREIGAHMGIRSTNGVNDHLR). Catalysis depends on for autocatalytic cleavage activity residues serine 149 and lysine 186.

The protein belongs to the peptidase S24 family. In terms of assembly, homodimer.

The enzyme catalyses Hydrolysis of Ala-|-Gly bond in repressor LexA.. In terms of biological role, represses a number of genes involved in the response to DNA damage (SOS response), including recA and lexA. In the presence of single-stranded DNA, RecA interacts with LexA causing an autocatalytic cleavage which disrupts the DNA-binding part of LexA, leading to derepression of the SOS regulon and eventually DNA repair. This Sorangium cellulosum (strain So ce56) (Polyangium cellulosum (strain So ce56)) protein is LexA repressor.